We begin with the raw amino-acid sequence, 247 residues long: Membrane-spanning 4-domains subfamily A member 6D (247 aa).

At 1 to 46 the chain is on the cytoplasmic side; it reads MIPQVVTSETVTVISPNGISFPQTDKPQPSHQSQDSLKKHLKAEIK. Residues 47 to 67 traverse the membrane as a helical segment; it reads VMAAIQIMCAVMVLSLGIILA. The Extracellular segment spans residues 68–80; it reads SVPSNLHFTSVFS. Residues 81–101 traverse the membrane as a helical segment; that stretch reads ILLESGYPFVGALFFAISGIL. At 102 to 121 the chain is on the cytoplasmic side; the sequence is SIVTEKKMTKPLVHSSLALS. A helical transmembrane segment spans residues 122–142; sequence ILSVLSALTGIAILSVSLAAL. At 143-180 the chain is on the extracellular side; the sequence is EPALQQCKLAFTQLDTTQDAYHFFSPEPLNSCFVAKAA. Residues 181 to 201 traverse the membrane as a helical segment; sequence LTGVFSLMLISSVLELGLAVL. The Cytoplasmic segment spans residues 202–247; that stretch reads TATLWWKQSSSAFSGNVIFLSQNSKNKSSVSSESLCNPTYENILTS. Serine 235 is modified (phosphoserine).

It belongs to the MS4A family. In terms of tissue distribution, expressed in thymus, spleen, intestine, colon, testis, heart, liver, brain, kidney, peripheral lymph node and bone marrow.

It localises to the membrane. In terms of biological role, may be involved in signal transduction as a component of a multimeric receptor complex. The sequence is that of Membrane-spanning 4-domains subfamily A member 6D (Ms4a6d) from Mus musculus (Mouse).